A 285-amino-acid chain; its full sequence is MPHRCAAQVVAGYRSTVSLVLVEHPRPEIAQITLNRPERMNSMAFDVMVPLKEALAQVSYDNSVRVVVLTGAGRGFSPGADHKSAGVVPHVENLTRPTYALRSMELLDDVILMLRRLHQPVIAAVNGPAIGGGLCLALAADIRVASSSAYFRAAGINNGLTASELGLSYLLPRAIGSSRAFEIMLTGRDVSAEEAERIGLVSRQVPDEQLLDACYAIAARMAGFSRPGIELTKRTLWSGLDAASLEAHMQAEGLGQLFVRLLTANFEEAVAARAEQRAPVFTDDT.

This sequence belongs to the enoyl-CoA hydratase/isomerase family.

It catalyses the reaction a (3S)-3-hydroxyacyl-CoA = a (2E)-enoyl-CoA + H2O. The enzyme catalyses a 4-saturated-(3S)-3-hydroxyacyl-CoA = a (3E)-enoyl-CoA + H2O. Could possibly oxidize fatty acids using specific components. This is Probable enoyl-CoA hydratase echA12 (echA12) from Mycobacterium tuberculosis (strain CDC 1551 / Oshkosh).